The chain runs to 208 residues: MVSKRVESLLNQLRTQGIVDERVLEAIALVPREKFVDEAFEHKAWENTALPIGQGQTISQPYMVARMTELLTLTPESRVLEIGTGSGYQTAILAHLVHHVCSVERIKSLQWQARRRLKQLDLHNVSTRHGDGWQGWQARAPFDAIIVTAAPPEIPTALLAQLDDEGVLVLPVGEEHQFLKRIRRRGNEFIIDTVEAVRFVPLVKGELA.

Ser-59 is an active-site residue.

Belongs to the methyltransferase superfamily. L-isoaspartyl/D-aspartyl protein methyltransferase family.

The protein resides in the cytoplasm. The catalysed reaction is [protein]-L-isoaspartate + S-adenosyl-L-methionine = [protein]-L-isoaspartate alpha-methyl ester + S-adenosyl-L-homocysteine. In terms of biological role, catalyzes the methyl esterification of L-isoaspartyl residues in peptides and proteins that result from spontaneous decomposition of normal L-aspartyl and L-asparaginyl residues. It plays a role in the repair and/or degradation of damaged proteins. The chain is Protein-L-isoaspartate O-methyltransferase from Klebsiella pneumoniae (strain 342).